The sequence spans 147 residues: Large ribosomal subunit protein uL15 (147 aa).

Positions 1 to 57 are disordered; that stretch reads MKLHELKSAPKSRNHKAKVVGRGHGSGLGKTSGRGQKGQKARKSGRTRPGFEGGQTP. The segment covering 10–21 has biased composition (basic residues); sequence PKSRNHKAKVVG. Positions 22 to 36 are enriched in gly residues; that stretch reads RGHGSGLGKTSGRGQ. Residues 37-46 are compositionally biased toward basic residues; that stretch reads KGQKARKSGR.

It belongs to the universal ribosomal protein uL15 family. In terms of assembly, part of the 50S ribosomal subunit.

Binds to the 23S rRNA. This Mycoplasmoides gallisepticum (strain R(low / passage 15 / clone 2)) (Mycoplasma gallisepticum) protein is Large ribosomal subunit protein uL15.